Here is a 453-residue protein sequence, read N- to C-terminus: MKFFALAALFASTVNSIAVDGLIPGARVIPANDVVALKKAGAYHQKHHHRRTVIIRSSSSDEDDVSADFLWGIKRANHGGRLLLQNGKKYVIGKKLDLTFLKDIEVQLDGELKFTNDVPYWQANNFYYDFQKSISFWRWGGEDIKIFGSGVLNGNGQRWYNEFAGQEILDPNNKYYRPILFVTENATRVSVEGITQLNSPCWTNFFVRTKDISFDNVFIHAYSTNASALPKNTDGFDTLNVDGLTVTNTRVDIGDDCLSPKPNTTNVFVKNLWCNGTHGASMGSIGQYPGVLDIIENVWIENVTLLNGENGARLKAWAGPDVGYGRINNVTYKNIHVENTDNPIVLDQCYFNINATQCAAYPSRVNFTNIVFEDIYGTSSGKRGKVVADLTCSPNAVCSGIRLKNIHLTSPAGSPPVIVCDGIQGDIGVECQSSSNSTTKRSVDLARSLKYRA.

Residues 1–16 (MKFFALAALFASTVNS) form the signal peptide. N-linked (GlcNAc...) asparagine glycans are attached at residues Asn185 and Asn225. Asp255 functions as the Proton donor in the catalytic mechanism. Cys257 and Cys274 are disulfide-bonded. N-linked (GlcNAc...) asparagine glycosylation is found at Asn263 and Asn275. The active site involves His278. PbH1 repeat units lie at residues 295–316 (IENVWIENVTLLNGENGARLKA) and 327–348 (INNVTYKNIHVENTDNPIVLDQ). N-linked (GlcNAc...) asparagine glycosylation is found at Asn302, Asn329, Asn354, and Asn366. The stretch at 362–405 (PSRVNFTNIVFEDIYGTSSGKRGKVVADLTCSPNAVCSGIRLKN) is one PbH1 3 repeat. The cysteines at positions 392 and 398 are disulfide-linked. N-linked (GlcNAc...) asparagine glycosylation is present at Asn436.

The protein belongs to the glycosyl hydrolase 28 family.

It is found in the secreted. It carries out the reaction [(1-&gt;4)-alpha-D-galacturonosyl](n) + H2O = alpha-D-galacturonate + [(1-&gt;4)-alpha-D-galacturonosyl](n-1). Functionally, specific in hydrolyzing the terminal glycosidic bond of polygalacturonic acid and oligogalacturonates. The protein is Probable exopolygalacturonase B (pgxB) of Aspergillus fumigatus (strain CBS 144.89 / FGSC A1163 / CEA10) (Neosartorya fumigata).